Reading from the N-terminus, the 723-residue chain is Catalase-peroxidase (723 aa).

Positions 1–29 (MDGNDLVENKCPVMHGGITVAGHSNTAWW) are cleaved as a signal peptide. The segment at residues 97–225 (WHSAGSYRLA…LAAVQMGLIY (129 aa)) is a cross-link (tryptophyl-tyrosyl-methioninium (Trp-Tyr) (with M-251)). Residue His-98 is the Proton acceptor of the active site. Positions 225–251 (YVNPEGVNGKSDPLKSAAQVRETFARM) form a cross-link, tryptophyl-tyrosyl-methioninium (Tyr-Met) (with W-97). Residue His-266 coordinates heme b.

Belongs to the peroxidase family. Peroxidase/catalase subfamily. As to quaternary structure, homodimer or homotetramer. Heme b serves as cofactor. In terms of processing, formation of the three residue Trp-Tyr-Met cross-link is important for the catalase, but not the peroxidase activity of the enzyme.

The catalysed reaction is H2O2 + AH2 = A + 2 H2O. It carries out the reaction 2 H2O2 = O2 + 2 H2O. In terms of biological role, bifunctional enzyme with both catalase and broad-spectrum peroxidase activity. The protein is Catalase-peroxidase of Hyphomonas neptunium (strain ATCC 15444).